The sequence spans 1368 residues: DNA-directed RNA polymerase subunit beta (1368 aa).

Belongs to the RNA polymerase beta chain family. In terms of assembly, the RNAP catalytic core consists of 2 alpha, 1 beta, 1 beta' and 1 omega subunit. When a sigma factor is associated with the core the holoenzyme is formed, which can initiate transcription.

The catalysed reaction is RNA(n) + a ribonucleoside 5'-triphosphate = RNA(n+1) + diphosphate. Its function is as follows. DNA-dependent RNA polymerase catalyzes the transcription of DNA into RNA using the four ribonucleoside triphosphates as substrates. This chain is DNA-directed RNA polymerase subunit beta, found in Burkholderia ambifaria (strain MC40-6).